A 117-amino-acid polypeptide reads, in one-letter code: Minor capsid protein VP2 (117 aa).

This sequence belongs to the lagovirus VP2 protein family. As to quaternary structure, homooligomer. The portal-like structure consists in 12 copies of VP2. Interacts with capsid protein VP1.

The protein resides in the virion. Its subcellular location is the host cytoplasm. Minor structural protein that forms a portal-like structure at a unique three-fold axis of symmetry, following binding to the host receptor. The channel formed by VP2 may allow the delivery of the viral genome through the host endosomal membrane. This chain is Minor capsid protein VP2, found in Oryctolagus cuniculus (Rabbit).